Here is a 583-residue protein sequence, read N- to C-terminus: R-linalool synthase QH5, chloroplastic (583 aa).

A chloroplast-targeting transit peptide spans 1-40 (MASISLFPYSILKQTSPLARGTAYNRIYSTKTTGITVDVA). Residues Arg-298, Asp-335, Asp-339, Arg-476, and Asp-479 each coordinate (2E)-geranyl diphosphate. Asp-335 and Asp-339 together coordinate Mg(2+). Positions 335-339 (DDVYD) match the DDXXD motif motif. The Mg(2+) site is built by Asp-479, Thr-483, and Glu-487. Asp-492 contacts K(+).

Belongs to the terpene synthase family. Tpsb subfamily. Mg(2+) serves as cofactor. Requires Mn(2+) as cofactor. The cofactor is K(+). Expressed in every aerial organ except for the stem stele of mature plants. Not detected in roots.

The protein localises to the plastid. It is found in the chloroplast. The enzyme catalyses (2E)-geranyl diphosphate + H2O = (R)-linalool + diphosphate. It functions in the pathway secondary metabolite biosynthesis; terpenoid biosynthesis. Functionally, monoterpene synthase that catalyzes the formation of (3R)-linalool from geranyl diphosphate, but not from isopentenyl diphosphate, dimethylallyl diphosphate, chrysanthemyl diphosphate, farnesyl diphosphate, (+)-copalyl diphosphate or geranylgeranyl diphosphate. This is R-linalool synthase QH5, chloroplastic from Artemisia annua (Sweet wormwood).